Reading from the N-terminus, the 228-residue chain is Glycosylphosphatidylinositol-anchored high density lipoprotein-binding protein 1 (228 aa).

Positions Met-1–Ala-22 are cleaved as a signal peptide. The tract at residues Trp-21–Pro-32 is disordered. An important for LPL transport to the lumenal surface of endothelial cells region spans residues Glu-24–Glu-48. Acidic residues predominate over residues Glu-24–Thr-49. Tyr-35 is subject to Sulfotyrosine. The region spanning Leu-61–Pro-148 is the UPAR/Ly6 domain. Disulfide bonds link Cys-63–Cys-88, Cys-66–Cys-75, Cys-81–Cys-109, Cys-113–Cys-129, and Cys-130–Cys-135. The N-linked (GlcNAc...) asparagine glycan is linked to Asn-76. Positions Leu-102–Trp-108 are important for interaction with LPL. The tract at residues Val-145–Gly-200 is disordered. Gly-198 carries GPI-anchor amidated glycine lipidation. Positions Ser-199 to Ala-228 are cleaved as a propeptide — removed in mature form.

As to quaternary structure, mostly monomer, but also homodimer and homooligomer. Interacts with lipoprotein lipase (LPL). Interacts with high affinity with high-density lipoprotein (HDL). Interacts with chylomicrons. Interacts with APOA5. Glycosylation of Asn-76 is critical for cell surface localization. In terms of processing, sulfation of a Tyr in the N-terminal acidic region increases the affinity for LPL. Detected in fat tissue. Detected on the luminal surface of capillary endothelial cells in heart, skeletal muscle and brown adipose tissue (at protein level). Detected in heart and brown adipose tissue. Expressed at lower levels in lung and liver.

It localises to the apical cell membrane. Its subcellular location is the basolateral cell membrane. The protein resides in the cell membrane. In terms of biological role, mediates the transport of lipoprotein lipase LPL from the basolateral to the apical surface of endothelial cells in capillaries. Anchors LPL on the surface of endothelial cells in the lumen of blood capillaries. Thereby, plays an important role in lipolytic processing of chylomicrons by LPL, triglyceride metabolism and lipid homeostasis. Binds chylomicrons and phospholipid particles that contain APOA5. Binds high-density lipoprotein (HDL) and plays a role in the uptake of lipids from HDL. The sequence is that of Glycosylphosphatidylinositol-anchored high density lipoprotein-binding protein 1 from Mus musculus (Mouse).